Consider the following 873-residue polypeptide: Potassium voltage-gated channel subfamily KQT member 3 (873 aa).

Residues 1–41 (MGLKARRAAGAAGGGGGEGGGGGGGAANPAGGDSAVAGDEE) are disordered. At 1-121 (MGLKARRAAG…IYDALERPRG (121 aa)) the chain is on the cytoplasmic side. A compositionally biased stretch (gly residues) spans 11-26 (AAGGGGGEGGGGGGGA). Thr82 bears the Phosphothreonine mark. A helical transmembrane segment spans residues 122–144 (WALLYHALVFLIVLGCLILAVLT). Residues 145 to 154 (TFKEYETVSG) lie on the Extracellular side of the membrane. The chain crosses the membrane as a helical span at residues 155–176 (DWLLLLETFAIFIFGAEFALRI). Residues 177–194 (WAAGCCCRYKGWRGRLKF) lie on the Cytoplasmic side of the membrane. The helical transmembrane segment at 195–214 (ARKPLCMLDIFVLIASVPVV) threads the bilayer. The Extracellular segment spans residues 215-226 (AVGNQGNVLATS). A helical; Voltage-sensor transmembrane segment spans residues 227 to 245 (LRSLRFLQILRMLRMDRRG). Residue Arg244 participates in a 1,2-diacyl-sn-glycero-3-phospho-(1D-myo-inositol-4,5-bisphosphate) binding. The Cytoplasmic segment spans residues 246–257 (GTWKLLGSAICA). A helical membrane pass occupies residues 258 to 283 (HSKELITAWYIGFLTLILSSFLVYLV). Lys260 contributes to the a 1,2-diacyl-sn-glycero-3-phospho-(1D-myo-inositol-4,5-bisphosphate) binding site. At 284-303 (EKDVPEMDAQGEEMKEEFET) the chain is on the extracellular side. Residues 304–316 (YADALWWGLITLA) constitute an intramembrane region (pore-forming). The Selectivity filter signature appears at 317–322 (TIGYGD). Residues 317-327 (TIGYGDKTPKT) are Extracellular-facing. Residues 328–354 (WEGRLIAATFSLIGVSFFALPAGILGS) form a helical membrane-spanning segment. Topologically, residues 355-873 (GLALKVQEQH…SIWTPSNKPT (519 aa)) are cytoplasmic. The interval 357-538 (ALKVQEQHRQ…RLYKKKFKET (182 aa)) is mediates interaction with calmodulin. Residue Lys367 participates in a 1,2-diacyl-sn-glycero-3-phospho-(1D-myo-inositol-4,5-bisphosphate) binding. 3 disordered regions span residues 575–603 (PGPPSTPKHKKSQKGSAFTYPSQQSPRNE), 723–742 (RGGPSSTKAQANLPSSGSTY), and 766–873 (ELQG…NKPT). Composition is skewed to polar residues over residues 588-601 (KGSAFTYPSQQSPR), 725-741 (GPSSTKAQANLPSSGST), and 844-873 (DPFTPSGSMPMSSTGDGISDSIWTPSNKPT).

It belongs to the potassium channel family. KQT (TC 1.A.1.15) subfamily. Kv7.3/KCNQ3 sub-subfamily. In terms of assembly, heterotetramer with KCNQ2; forms heterotetrameric M-channel responsible for the native M-current. Interacts with calmodulin; the interaction is calcium-independent, constitutive and participates in the proper assembly of a functional M-channel. Heteromultimer with KCNQ5. May associate with KCNE2. Interacts with IQCJ-SCHIP1. Interacts (via the pore module) with SLC5A3/SMIT1; forms a coregulatory complex that alters ion selectivity, voltage dependence and gating kinetics of the channel. In terms of processing, KCNQ2/KCNQ3 are ubiquitinated by NEDD4L. Ubiquitination leads to protein degradation. Degradation induced by NEDD4L is inhibited by USP36. As to expression, expressed in brain and sympathetic ganglia. In brain, expressed in cortex, hippocampus and at much lower levels in cerebellum. In sympathetic ganglia, expressed at approximately equal levels in both superior cervical ganglia and prevertebral ganglia.

The protein resides in the cell membrane. It carries out the reaction K(+)(in) = K(+)(out). It catalyses the reaction Rb(+)(in) = Rb(+)(out). The catalysed reaction is Cs(+)(in) = Cs(+)(out). The enzyme catalyses Na(+)(in) = Na(+)(out). Phosphatidylinositol-4,5-bisphosphate (PIP2) potentiates the activation of KCNQ channels by enhancing the electro-mechanical coupling of the voltage-sensing domain (VSD) and the pore-forming domain (PD). In the closed state of the channel, PIP2 is anchored at the S2-S3 loop; upon channel activation, PIP2 interacts with the S4-S5 linker and is involved in channel gating. Calcium suppresses KCNQ2-KCNQ3 channel currents, with calcium-bound calmodulin inducing a change in channel configuration which leads to the reduction of channel affinity for PIP2 and subsequent current suppression. M-channel is blocked by XE991. Functionally, pore-forming subunit of the voltage-gated potassium (Kv) M-channel which is responsible for the M-current, a key controller of neuronal excitability. M-channel is composed of pore-forming subunits KCNQ2 and KCNQ3 assembled as heterotetramers, each subunit containing a voltage sensing domain (VSD) and a pore-forming domain (PD). The native M-current has a slowly activating and deactivating potassium conductance which plays a critical role in determining the subthreshold electrical excitability of neurons as well as the responsiveness to synaptic inputs. M-channel is selectively permeable in vitro to other cations besides potassium, in decreasing order of affinity K(+) &gt; Rb(+) &gt; Cs(+) &gt; Na(+). M-channel association with SLC5A3/SMIT1 alters channel ion selectivity, increasing Na(+) and Cs(+) permeation relative to K(+). Suppressed by activation of M1 muscarinic acetylcholine receptors. KCNQ3 also associates with KCNQ5 to form a functional channel in vitro and may also contribute to the M-current in brain. The sequence is that of Potassium voltage-gated channel subfamily KQT member 3 from Rattus norvegicus (Rat).